Here is a 152-residue protein sequence, read N- to C-terminus: UPF0266 membrane protein PM0830 (152 aa).

Transmembrane regions (helical) follow at residues 1-21, 45-65, and 66-86; these read MMIINVLLCLGIFCFLLYAFY, KDALIFSLLIGIIIYQTYTNL, and SSATLYLLTALILLSVYAAFI.

Belongs to the UPF0266 family.

It is found in the cell inner membrane. The polypeptide is UPF0266 membrane protein PM0830 (Pasteurella multocida (strain Pm70)).